A 236-amino-acid polypeptide reads, in one-letter code: Small ribosomal subunit protein uS2c (236 aa).

This sequence belongs to the universal ribosomal protein uS2 family.

It localises to the plastid. The protein localises to the chloroplast. The polypeptide is Small ribosomal subunit protein uS2c (rps2) (Ipomoea purpurea (Common morning glory)).